Consider the following 318-residue polypeptide: Methionyl-tRNA formyltransferase (318 aa).

112 to 115 lines the (6S)-5,6,7,8-tetrahydrofolate pocket; that stretch reads SLLP.

It belongs to the Fmt family.

The enzyme catalyses L-methionyl-tRNA(fMet) + (6R)-10-formyltetrahydrofolate = N-formyl-L-methionyl-tRNA(fMet) + (6S)-5,6,7,8-tetrahydrofolate + H(+). Functionally, attaches a formyl group to the free amino group of methionyl-tRNA(fMet). The formyl group appears to play a dual role in the initiator identity of N-formylmethionyl-tRNA by promoting its recognition by IF2 and preventing the misappropriation of this tRNA by the elongation apparatus. In Mycobacterium leprae (strain Br4923), this protein is Methionyl-tRNA formyltransferase.